The following is a 251-amino-acid chain: uncharacterized protein (251 aa).

The Response regulatory domain occupies 3-118 (KVIICDDERI…QLEHILDILV (116 aa)). Aspartate 55 bears the 4-aspartylphosphate mark. The HTH araC/xylS-type domain maps to 152-249 (NQILSQIKQH…HMSPSDYNKQ (98 aa)). 2 consecutive DNA-binding regions (H-T-H motif) follow at residues 169 to 190 (LDLI…KEHV) and 216 to 239 (HYEI…KKYL).

Phosphorylated by SERP2405.

It localises to the cytoplasm. Its function is as follows. Probable member of the two-component regulatory system SERP2405/SERP2406. This is an uncharacterized protein from Staphylococcus epidermidis (strain ATCC 35984 / DSM 28319 / BCRC 17069 / CCUG 31568 / BM 3577 / RP62A).